Here is a 705-residue protein sequence, read N- to C-terminus: MATANFGKIQIGIYVEIKRSDGRIHQAMVTSLNEDNESVTVEWIENGDTKGKEIDLESIFSLNPDLVPDEDIEPSPEIPPPSSSSKVNKIVKNRRTVASIKNDPPPRDNRVVGSARARPSQLPEQSSSAQQNGSVSDISPVQAAKKEFGPPSRRKSNCVKEVEKLQEKREKRRLQQQELREKRAQDVDATNPNYEIMCMIRDFRGSLDYRPLTTADPIDEHRICVCVRKRPLNKKETQMKDLDVITIPSKDVVMVHEPKQKVDLTRYLENQTFRFDYAFDDSAPNEMVYRFTARPLVETIFERGMATCFAYGQTGSGKTHTMGGDCSGKNQDCSKGIYALAARDVFLMLKKPNYKKLELQVYATFFEIYSGKVFDLLNRKTKLRVLEDGKQQVQVVGLQEREVKCVEDVLKLIDIGNSCRTSGQTSANAHSSRSHAVFQIILRRKGKLHGKFSLIDLAGNERGADTSSADRQTRLEGAEINKSLLALKECIRALGRNKPHTPFRASKLTQVLRDSFIGENSRTCMIATISPGMASCENTLNTLRYANRVKELTVDPTAAGDVRPIMHHPPSQIDDLETQWGVGSSPQRDDLKLLCEQNEEEVSPQLFTFHEAVSQMVEMEEQVVEDHRAVFQESIRWIEDEKALLEMTEEVDYDVDSYATQLEAILEQKIDILTELRDKVKSFRAALQEEEQASKQINPKRPRAL.

The tract at residues 65-185 is disordered; sequence DLVPDEDIEP…QQELREKRAQ (121 aa). S75 is modified (phosphoserine). T96 is modified (phosphothreonine). S99 bears the Phosphoserine mark. K101 bears the N6-acetyllysine mark. Polar residues predominate over residues 122–139; sequence LPEQSSSAQQNGSVSDIS. Residues S134 and S139 each carry the phosphoserine modification. A coiled-coil region spans residues 153–186; it reads RRKSNCVKEVEKLQEKREKRRLQQQELREKRAQD. Positions 158–185 are enriched in basic and acidic residues; the sequence is CVKEVEKLQEKREKRRLQQQELREKRAQ. One can recognise a Kinesin motor domain in the interval 222-552; that stretch reads RICVCVRKRP…LRYANRVKEL (331 aa). Residue 312–319 participates in ATP binding; that stretch reads GQTGSGKT. Q572 bears the Phosphoserine mark. A coiled-coil region spans residues 659–698; the sequence is ATQLEAILEQKIDILTELRDKVKSFRAALQEEEQASKQIN.

It belongs to the TRAFAC class myosin-kinesin ATPase superfamily. Kinesin family. MCAK/KIF2 subfamily. In terms of assembly, interacts with AURKA and PLK1. Interacts with PSRC1. Interacts with MCRS1; the interaction enhances recruitment of KIF2A to the minus ends of spindle microtubules which promotes chromosome alignment.

It localises to the cytoplasm. The protein resides in the cytoskeleton. It is found in the microtubule organizing center. Its subcellular location is the centrosome. The protein localises to the spindle pole. It localises to the spindle. Plus end-directed microtubule-dependent motor required for normal brain development. May regulate microtubule dynamics during axonal growth. Required for normal progression through mitosis. Required for normal congress of chromosomes at the metaphase plate. Required for normal spindle dynamics during mitosis. Promotes spindle turnover. Implicated in formation of bipolar mitotic spindles. Has microtubule depolymerization activity. The protein is Kinesin-like protein KIF2A of Rattus norvegicus (Rat).